A 530-amino-acid polypeptide reads, in one-letter code: Tetrahydroberberine oxidase (530 aa).

The first 24 residues, 1–24 (MSKMASSIFATFSLLSSLLPTSLA), serve as a signal peptide directing secretion. A disulfide bond links Cys36 and Cys94. Asn51 is a glycosylation site (N-linked (GlcNAc...) asparagine). The region spanning 72 to 246 (TTPKPNFIVT…LAWKIRLVPV (175 aa)) is the FAD-binding PCMH-type domain. Residues 109-171 (HDFEGLSYVS…GVHAFPAGLC (63 aa)) constitute a cross-link (6-(S-cysteinyl)-8alpha-(pros-histidyl)-FAD (His-Cys)). Residue Asn483 is glycosylated (N-linked (GlcNAc...) asparagine).

This sequence belongs to the oxygen-dependent FAD-linked oxidoreductase family. Requires FAD as cofactor. In terms of processing, the FAD cofactor is bound via a bicovalent 6-S-cysteinyl, 8alpha-N1-histidyl FAD linkage.

It carries out the reaction (S)-canadine + 2 O2 + H(+) = berberine + 2 H2O2. Functionally, catalyzes the oxidation of different tetrahydroprotoberberines, such as (S)-canadine, (S)-scoulerine and (S)-corypalmine. Catalyzes the oxidation of (S)-coreximine and (S)-tetrahydropalmatine. Catalyzes the oxidation of different 1-benzylisoquinoline alkaloids, such as (S)-norreticuline, (S)-nororientaline, (S)-coclaurine and (S)-norisoorientaline. Exhibits strict specificity for the (S)-enantiomer of tetrahydroprotoberbirines and 1-benzylisoquinoline alkaloids. The chain is Tetrahydroberberine oxidase from Berberis wilsoniae (Mrs Wilson's barberry).